The following is a 937-amino-acid chain: MMTTALTPFSARHIGPGVNDVRAMLAVIGVPSVETLISQAVPQSIRLDLPLTLPAPASEAEALAELSAIMAKNTVLKSFIGAGYHGVHVPPVIQRNLFENPAWYTAYTPYQAEISQGRLEMLFNFQTLVTELTGLPVASASLLDEATAVAEAVGIALRHHRDKRTKVAFAGTPHPQTLDVVRTRAEPLGIEIDGETIDDNTAALLVSWPDTLGVYGDHKAAIDKARAAGALVVFIADPLGLTLTDAPAKLGADIAVGPMQRFGVPMGFGGPHAAYCAVSDRLTRLMPGRLVGQSTDSKGRPGYRLALQTREQHIRRDKATSNICTAQALLANMATAYAIWHGPAGLQAIAGRIHALANRLASGLKAAGVSVLGASRFDTVTVEAKGKAAEIAEAAEKTGRLLRVLDADHVGIAFDETSTDADLDAIASLFGAKAAPSADSTVPGKPRGKEFLTQPVFNENKSETDMMRLLRRLADKDLALDRSMIPLGSCTMKLNAAAEMMPVSWPSIADLHPFAPASHSAGYRAMIGELEGWLSEITGFDAVSLQPNAGSQGEYAGLLAIRAYHRSRGEGHRTVCLIPSSAHGTNPASAAMAGMSVVVVRCLEDGNIDMDDMRAKANEHSKNLAALMFTYPSTHGVYEEGARHLCALIHEHGGQVYFDGANLNALVALARPADIGADVCHMNLHKTFCIPHGGGGPGVGPIGVKAHLKPYLPGHVTEGSAHAVSAAPFGSASILPITWMYIRMMGAAGLKQATETAIISANYVATRLAPHFPLLYKGRHDRIAHECILDTRVLKESAGISVDDIAKRLIDYGFHAPTMSFPVAGTLMVEPTESEPKRELDRFCEAMIAIAGEAAKVARGDWPLADNPLVNAPHTAAETLAGQWTHPYSRLEAAYPAGDADTAAKYWPPVSRIDNVAGDRNLVCSCPPLSDYLGAAE.

At Lys-686 the chain carries N6-(pyridoxal phosphate)lysine.

Belongs to the GcvP family. As to quaternary structure, the glycine cleavage system is composed of four proteins: P, T, L and H. Pyridoxal 5'-phosphate is required as a cofactor.

The catalysed reaction is N(6)-[(R)-lipoyl]-L-lysyl-[glycine-cleavage complex H protein] + glycine + H(+) = N(6)-[(R)-S(8)-aminomethyldihydrolipoyl]-L-lysyl-[glycine-cleavage complex H protein] + CO2. In terms of biological role, the glycine cleavage system catalyzes the degradation of glycine. The P protein binds the alpha-amino group of glycine through its pyridoxal phosphate cofactor; CO(2) is released and the remaining methylamine moiety is then transferred to the lipoamide cofactor of the H protein. The protein is Glycine dehydrogenase (decarboxylating) of Mesorhizobium japonicum (strain LMG 29417 / CECT 9101 / MAFF 303099) (Mesorhizobium loti (strain MAFF 303099)).